Consider the following 661-residue polypeptide: Fusaric acid cluster transcription factor FUB12 (661 aa).

Residues 17–48 (CVPCRTRKIKCNAAVVGLPCGSCVSRECPDEC) constitute a DNA-binding region (zn(2)-C6 fungal-type). 2 disordered regions span residues 56 to 132 (RTVK…PPGQ) and 151 to 184 (SAAQTDASDHQSNDEPDDSFNSQIHHWNPPPQLD). The segment covering 73–98 (PDTNGSVLSPRQQQLPTNVSRQATDS) has biased composition (polar residues). Residues 99 to 109 (SHSDPVEESIH) are compositionally biased toward basic and acidic residues. The segment covering 110–119 (ASHTGSSLRN) has biased composition (polar residues). Positions 120–129 (DTPHSRDRRP) are enriched in basic and acidic residues.

It is found in the nucleus. Transcription factor that is involved in the formation of the two Fusaric acid derivatives, dehydrofusaric acid and fusarinolic acid, serving as a detoxification mechanism. In Gibberella moniliformis (strain M3125 / FGSC 7600) (Maize ear and stalk rot fungus), this protein is Fusaric acid cluster transcription factor FUB12.